A 746-amino-acid chain; its full sequence is Taurocyamine kinase (746 aa).

Approximate repeat units lie at residues 31–393 and 394–705; these read MQVE…PEGV and MPVE…YGEH. A Phosphagen kinase N-terminal 1 domain is found at 35 to 116; sequence SLQNLQAKIR…FDAVIADYHK (82 aa). One can recognise a Phosphagen kinase C-terminal 1 domain in the interval 146–382; it reads LVVSTRVRLG…RALLELEVML (237 aa). ATP-binding positions include 149-153, histidine 212, and arginine 256; that span reads STRVR. The active site involves cysteine 298. ATP contacts are provided by residues 307-311 and 335-340; these read RASVH and RGTHGE. Positions 398–479 constitute a Phosphagen kinase N-terminal 2 domain; that stretch reads PLTYLAKLLE…LDPLICDYHG (82 aa). A Phosphagen kinase C-terminal 2 domain is found at 509 to 746; the sequence is FIVSTRVRVG…AKMIEIEKGL (238 aa). Residues 512–516, histidine 575, and arginine 619 contribute to the ATP site; that span reads STRVR. Cysteine 661 is an active-site residue. ATP contacts are provided by residues 670–674 and 699–704; these read RASVL and RGLYGE.

This sequence belongs to the ATP:guanido phosphotransferase family. Requires Mg(2+) as cofactor.

It catalyses the reaction taurocyamine + ATP = N-phosphotaurocyamine + ADP + H(+). In terms of biological role, this family of enzymes reversibly catalyzes the transfer of phosphate between ATP and various phosphogens (e.g. creatine phosphate). This is Taurocyamine kinase from Schistosoma mansoni (Blood fluke).